A 455-amino-acid polypeptide reads, in one-letter code: Mitochondrial distribution and morphology protein 10 (455 aa).

Disordered regions lie at residues 216 to 249 (WETT…EDAV), 278 to 311 (IRFS…PSPA), and 377 to 399 (PRSS…PLGE). Positions 217–227 (ETTNGENGTNT) are enriched in low complexity. Residues 228–237 (SAPGNASNSR) are compositionally biased toward polar residues. The segment covering 291–301 (AQIPPPSPFTP) has biased composition (pro residues).

Belongs to the MDM10 family. Component of the ER-mitochondria encounter structure (ERMES) or MDM complex, composed of MMM1, MDM10, MDM12 and MDM34. Associates with the mitochondrial outer membrane sorting assembly machinery SAM(core) complex.

It localises to the mitochondrion outer membrane. In terms of biological role, component of the ERMES/MDM complex, which serves as a molecular tether to connect the endoplasmic reticulum and mitochondria. Components of this complex are involved in the control of mitochondrial shape and protein biogenesis and may function in phospholipid exchange. MDM10 is involved in the late assembly steps of the general translocase of the mitochondrial outer membrane (TOM complex). Functions in the TOM40-specific route of the assembly of outer membrane beta-barrel proteins, including the association of TOM40 with the receptor TOM22 and small TOM proteins. Can associate with the SAM(core) complex as well as the MDM12-MMM1 complex, both involved in late steps of the major beta-barrel assembly pathway, that is responsible for biogenesis of all outer membrane beta-barrel proteins. May act as a switch that shuttles between both complexes and channels precursor proteins into the TOM40-specific pathway. Plays a role in mitochondrial morphology and in the inheritance of mitochondria. This Coprinopsis cinerea (strain Okayama-7 / 130 / ATCC MYA-4618 / FGSC 9003) (Inky cap fungus) protein is Mitochondrial distribution and morphology protein 10.